The sequence spans 133 residues: S-adenosylmethionine decarboxylase proenzyme (133 aa).

Catalysis depends on Ser65, which acts as the Schiff-base intermediate with substrate; via pyruvic acid. The residue at position 65 (Ser65) is a Pyruvic acid (Ser); by autocatalysis. His70 serves as the catalytic Proton acceptor; for processing activity. Cys85 (proton donor; for catalytic activity) is an active-site residue.

This sequence belongs to the prokaryotic AdoMetDC family. Type 1 subfamily. In terms of assembly, heterotetramer of two alpha and two beta chains arranged as a dimer of alpha/beta heterodimers. Pyruvate serves as cofactor. Is synthesized initially as an inactive proenzyme. Formation of the active enzyme involves a self-maturation process in which the active site pyruvoyl group is generated from an internal serine residue via an autocatalytic post-translational modification. Two non-identical subunits are generated from the proenzyme in this reaction, and the pyruvate is formed at the N-terminus of the alpha chain, which is derived from the carboxyl end of the proenzyme. The post-translation cleavage follows an unusual pathway, termed non-hydrolytic serinolysis, in which the side chain hydroxyl group of the serine supplies its oxygen atom to form the C-terminus of the beta chain, while the remainder of the serine residue undergoes an oxidative deamination to produce ammonia and the pyruvoyl group blocking the N-terminus of the alpha chain.

The enzyme catalyses S-adenosyl-L-methionine + H(+) = S-adenosyl 3-(methylsulfanyl)propylamine + CO2. It functions in the pathway amine and polyamine biosynthesis; S-adenosylmethioninamine biosynthesis; S-adenosylmethioninamine from S-adenosyl-L-methionine: step 1/1. Functionally, catalyzes the decarboxylation of S-adenosylmethionine to S-adenosylmethioninamine (dcAdoMet), the propylamine donor required for the synthesis of the polyamines spermine and spermidine from the diamine putrescine. This is S-adenosylmethionine decarboxylase proenzyme from Brevibacillus brevis (strain 47 / JCM 6285 / NBRC 100599).